The sequence spans 397 residues: ATP-dependent RNA helicase eIF4A (397 aa).

A Q motif motif is present at residues 23–51; the sequence is YKFDDLNLKPNIVRGIFGYGYETPSAIQQ. A Helicase ATP-binding domain is found at 54 to 224; that stretch reads ILPITEGRDV…TKFMNNPVRI (171 aa). An ATP-binding site is contributed by 67 to 74; sequence AQSGTGKT. The short motif at 172 to 175 is the DEAD box element; the sequence is DEAD. A Helicase C-terminal domain is found at 255–396; it reads DLYDSISVTQ…EMPADIGSLF (142 aa).

This sequence belongs to the DEAD box helicase family. eIF4A subfamily. In terms of assembly, component of the eIF4F complex, which composition varies with external and internal environmental conditions. It is composed of at least eIF4A, eIF4E and eIF4G.

It is found in the cytoplasm. The enzyme catalyses ATP + H2O = ADP + phosphate + H(+). Its function is as follows. ATP-dependent RNA helicase which is a subunit of the eIF4F complex involved in cap recognition and is required for mRNA binding to ribosome. In the current model of translation initiation, eIF4A unwinds RNA secondary structures in the 5'-UTR of mRNAs which is necessary to allow efficient binding of the small ribosomal subunit, and subsequent scanning for the initiator codon. This chain is ATP-dependent RNA helicase eIF4A (TIF1), found in Lodderomyces elongisporus (strain ATCC 11503 / CBS 2605 / JCM 1781 / NBRC 1676 / NRRL YB-4239) (Yeast).